We begin with the raw amino-acid sequence, 667 residues long: Leucine-rich repeat-containing protein 43 (667 aa).

Residues 1–11 (METSESSTSDY) are compositionally biased toward polar residues. Residues 1 to 24 (METSESSTSDYRQTEGEGEGVPGT) form a disordered region. 4 LRR repeats span residues 148-169 (KLEE…NLPP), 170-191 (TLKV…CSAP), 194-213 (RLQH…ESLY), and 221-242 (QLVS…ILGL). Residues 256–294 (NPLSLVPYYRGFTIDSLAHLCVLDDITVSPNEKHQFRGL) enclose the LRRCT domain. Disordered regions lie at residues 374-407 (FSGT…TEEM), 533-570 (ESPL…RQDP), and 616-640 (SKKV…SGYQ). Positions 377–386 (TDEEDQQEDP) are enriched in acidic residues. The span at 390–399 (RHRHRGRQRF) shows a compositional bias: basic residues. A compositionally biased stretch (basic and acidic residues) spans 540–553 (KGKDNNKKKEPAKD). The span at 617 to 627 (KKVKKSLKKDR) shows a compositional bias: basic residues.

The polypeptide is Leucine-rich repeat-containing protein 43 (Lrrc43) (Mus musculus (Mouse)).